A 434-amino-acid chain; its full sequence is Phosphomethylpyrimidine synthase (434 aa).

Substrate contacts are provided by residues Asn74, Met103, Tyr132, His171, 193 to 195 (SRG), 234 to 237 (DGIR), and Glu273. A Zn(2+)-binding site is contributed by His277. Tyr300 provides a ligand contact to substrate. His341 contacts Zn(2+). Residues Cys417, Cys420, and Cys424 each coordinate [4Fe-4S] cluster.

It belongs to the ThiC family. As to quaternary structure, homodimer. [4Fe-4S] cluster is required as a cofactor.

The enzyme catalyses 5-amino-1-(5-phospho-beta-D-ribosyl)imidazole + S-adenosyl-L-methionine = 4-amino-2-methyl-5-(phosphooxymethyl)pyrimidine + CO + 5'-deoxyadenosine + formate + L-methionine + 3 H(+). The protein operates within cofactor biosynthesis; thiamine diphosphate biosynthesis. Catalyzes the synthesis of the hydroxymethylpyrimidine phosphate (HMP-P) moiety of thiamine from aminoimidazole ribotide (AIR) in a radical S-adenosyl-L-methionine (SAM)-dependent reaction. The polypeptide is Phosphomethylpyrimidine synthase (Desulfotalea psychrophila (strain LSv54 / DSM 12343)).